The sequence spans 329 residues: Tetraacyldisaccharide 4'-kinase (329 aa).

57–64 (TAGGSGKT) is an ATP binding site.

This sequence belongs to the LpxK family.

The catalysed reaction is a lipid A disaccharide + ATP = a lipid IVA + ADP + H(+). It participates in glycolipid biosynthesis; lipid IV(A) biosynthesis; lipid IV(A) from (3R)-3-hydroxytetradecanoyl-[acyl-carrier-protein] and UDP-N-acetyl-alpha-D-glucosamine: step 6/6. In terms of biological role, transfers the gamma-phosphate of ATP to the 4'-position of a tetraacyldisaccharide 1-phosphate intermediate (termed DS-1-P) to form tetraacyldisaccharide 1,4'-bis-phosphate (lipid IVA). The sequence is that of Tetraacyldisaccharide 4'-kinase from Thiobacillus denitrificans (strain ATCC 25259 / T1).